Consider the following 127-residue polypeptide: uncharacterized protein (127 aa).

This is an uncharacterized protein from Saccharomyces cerevisiae (strain ATCC 204508 / S288c) (Baker's yeast).